The sequence spans 546 residues: Chaperonin GroEL (546 aa).

ATP-binding positions include 30-33 (TLGP), Lys51, 87-91 (DGTTT), Gly415, 479-481 (NAA), and Asp495. The segment at 526–546 (KKDEPAMPAGGGMGGMGGMDF) is disordered. Residues 534–546 (AGGGMGGMGGMDF) show a composition bias toward gly residues.

The protein belongs to the chaperonin (HSP60) family. Forms a cylinder of 14 subunits composed of two heptameric rings stacked back-to-back. Interacts with the co-chaperonin GroES.

Its subcellular location is the cytoplasm. It catalyses the reaction ATP + H2O + a folded polypeptide = ADP + phosphate + an unfolded polypeptide.. In terms of biological role, together with its co-chaperonin GroES, plays an essential role in assisting protein folding. The GroEL-GroES system forms a nano-cage that allows encapsulation of the non-native substrate proteins and provides a physical environment optimized to promote and accelerate protein folding. The sequence is that of Chaperonin GroEL from Xanthomonas oryzae pv. oryzae (strain MAFF 311018).